Reading from the N-terminus, the 159-residue chain is Transcriptional repressor NrdR (159 aa).

The tract at residues 1–26 (MRCPFCAHDNSQVKDSRPSEDNTSIR) is disordered. A zinc finger lies at 3 to 34 (CPFCAHDNSQVKDSRPSEDNTSIRRRRQCEGC). Positions 11–24 (SQVKDSRPSEDNTS) are enriched in basic and acidic residues. Positions 49–139 (VVVVKSGERR…VYRDFTEARD (91 aa)) constitute an ATP-cone domain.

This sequence belongs to the NrdR family. Zn(2+) serves as cofactor.

In terms of biological role, negatively regulates transcription of bacterial ribonucleotide reductase nrd genes and operons by binding to NrdR-boxes. The chain is Transcriptional repressor NrdR from Novosphingobium aromaticivorans (strain ATCC 700278 / DSM 12444 / CCUG 56034 / CIP 105152 / NBRC 16084 / F199).